The primary structure comprises 763 residues: Phosphoglycerol transferase I (763 aa).

4 consecutive transmembrane segments (helical) span residues 4-19 (LLSF…IYAW), 26-48 (WWFA…LFAS), 76-98 (YILP…GWIL), and 105-127 (PHHF…ASPA).

The protein belongs to the OpgB family.

The protein localises to the cell inner membrane. It carries out the reaction a phosphatidylglycerol + a membrane-derived-oligosaccharide D-glucose = a 1,2-diacyl-sn-glycerol + a membrane-derived-oligosaccharide 6-(glycerophospho)-D-glucose.. Its pathway is glycan metabolism; osmoregulated periplasmic glucan (OPG) biosynthesis. In terms of biological role, transfers a phosphoglycerol residue from phosphatidylglycerol to the membrane-bound nascent glucan backbones. In Escherichia coli O6:H1 (strain CFT073 / ATCC 700928 / UPEC), this protein is Phosphoglycerol transferase I.